Here is a 659-residue protein sequence, read N- to C-terminus: Heparin-sulfate lyase (659 aa).

Residues 1 to 24 form the signal peptide; sequence MTTKIFKRIIVFAVIALSSGNILA. Catalysis depends on Tyr294, which acts as the Proton acceptor.

It belongs to the polysaccharide lyase 12 family.

The protein localises to the periplasm. The catalysed reaction is Elimination of sulfate, appears to act on linkages between N-acetyl-D-glucosamine and uronate. Product is an unsaturated sugar.. Its function is as follows. Specifically cleaves heparan sulfate-rich regions of acidic polysaccharides. Does not act on N,O-desulfated glucosamine or N-acetyl-O-sulfated glucosamine linkages. Functions in cleaving metazoan heparan sulfate and providing carbon, nitrogen and sulfate sources for microorganisms. In Pedobacter heparinus (strain ATCC 13125 / DSM 2366 / CIP 104194 / JCM 7457 / NBRC 12017 / NCIMB 9290 / NRRL B-14731 / HIM 762-3), this protein is Heparin-sulfate lyase (hepC).